Consider the following 310-residue polypeptide: tRNA dimethylallyltransferase (310 aa).

Glycine 14–threonine 21 is a binding site for ATP. Threonine 16–threonine 21 is a substrate binding site. Residues aspartate 39–glutamine 42 are interaction with substrate tRNA.

It belongs to the IPP transferase family. Monomer. Requires Mg(2+) as cofactor.

It carries out the reaction adenosine(37) in tRNA + dimethylallyl diphosphate = N(6)-dimethylallyladenosine(37) in tRNA + diphosphate. Functionally, catalyzes the transfer of a dimethylallyl group onto the adenine at position 37 in tRNAs that read codons beginning with uridine, leading to the formation of N6-(dimethylallyl)adenosine (i(6)A). This is tRNA dimethylallyltransferase from Corynebacterium jeikeium (strain K411).